The sequence spans 493 residues: Dipeptide permease D (493 aa).

At 1 to 13 (MNKHASQPRAIYY) the chain is on the cytoplasmic side. A helical transmembrane segment spans residues 14–34 (VVALQIWEYFSFYGMRALLIL). At 35–48 (YLTNQLKYNDTHAY) the chain is on the periplasmic side. Residues 49–69 (ELFSAYCSLVYVTPILGGFLA) traverse the membrane as a helical segment. Residues 70–77 (DKVLGNRM) lie on the Cytoplasmic side of the membrane. A helical transmembrane segment spans residues 78–98 (AVMLGALLMAIGHVVLGASEI). The Periplasmic segment spans residues 99 to 100 (HP). The helical transmembrane segment at 101-121 (SFLYLSLAIIVCGYGLFKSNV) threads the bilayer. Topologically, residues 122-137 (SCLLGELYEPTDPRRD) are cytoplasmic. The helical transmembrane segment at 138 to 158 (GGFSLMYAAGNVGSIIAPIAC) threads the bilayer. Residues 159 to 166 (GYAQEEYS) are Periplasmic-facing. A helical transmembrane segment spans residues 167–187 (WAMGFGLAAVGMIAGLVIFLC). Topologically, residues 188-211 (GNRHFTHTRGVNKKVLRATNFLLP) are cytoplasmic. A helical membrane pass occupies residues 212 to 232 (NWGWLLVLLVATPALITVLFW). Over 233 to 234 (KE) the chain is Periplasmic. Residues 235-255 (WSVYALIVATIIGLGVLAKIY) form a helical membrane-spanning segment. The Cytoplasmic segment spans residues 256–268 (RKAENQKQRKELR). A helical membrane pass occupies residues 269–289 (LIVTLTFFSMLFWAFAQQGGS). The Periplasmic portion of the chain corresponds to 290–311 (SISLYIDRFVNRDMFGYTVPTA). Residues 312–332 (MFQSINAFAVMLCGVFLAWVV) traverse the membrane as a helical segment. Topologically, residues 333–343 (KESVAGNRTVR) are cytoplasmic. The helical transmembrane segment at 344–364 (IWGKFALGLGLMSAGFCILTL) threads the bilayer. Over 365 to 378 (SARWSAMYGHSSLP) the chain is Periplasmic. The chain crosses the membrane as a helical span at residues 379–399 (LMVLGLAVMGFAELFIDPVAM). The Cytoplasmic portion of the chain corresponds to 400–412 (SQITRIEIPGVTG). A helical membrane pass occupies residues 413–433 (VLTGIYMLLSGAIANYLAGVI). At 434 to 461 (ADQTSQASFDASGAINYSINAYIEVFDQ) the chain is on the periplasmic side. Residues 462–482 (ITWGALACVGVVLMIWLYQAL) form a helical membrane-spanning segment. Residues 483 to 493 (KFRNRALALES) lie on the Cytoplasmic side of the membrane.

The protein belongs to the major facilitator superfamily. Proton-dependent oligopeptide transporter (POT/PTR) (TC 2.A.17) family. DtpD subfamily. As to quaternary structure, monomer in solution. Exhibits a doughnut-like shape with a central, shallow depression and has a diameter of 8 nm.

The protein localises to the cell inner membrane. Probable proton-dependent permease that transports dipeptides. In Escherichia coli O157:H7, this protein is Dipeptide permease D (dtpD).